Consider the following 22-residue polypeptide: uncharacterized protein (22 aa).

The disordered stretch occupies residues 1–22 (MHNSIAYDKDGNSTGQKYYAYG).

This is an uncharacterized protein from Lactobacillus helveticus (Lactobacillus suntoryeus).